Consider the following 391-residue polypeptide: Cytochrome P450 165A3 (391 aa).

A disordered region spans residues 1–22; the sequence is MFEEKNALRGTEIHRRERFDPG. C342 contributes to the heme binding site.

It belongs to the cytochrome P450 family. Heme serves as cofactor.

The protein operates within antibiotic biosynthesis; vancomycin biosynthesis. Its function is as follows. Involved in the coupling of aromatic side chains of the heptapeptide of vancomycin. The sequence is that of Cytochrome P450 165A3 (cyp165A3) from Amycolatopsis orientalis (Nocardia orientalis).